The chain runs to 236 residues: Phosphoribosylaminoimidazole-succinocarboxamide synthase (236 aa).

The protein belongs to the SAICAR synthetase family.

The enzyme catalyses 5-amino-1-(5-phospho-D-ribosyl)imidazole-4-carboxylate + L-aspartate + ATP = (2S)-2-[5-amino-1-(5-phospho-beta-D-ribosyl)imidazole-4-carboxamido]succinate + ADP + phosphate + 2 H(+). Its pathway is purine metabolism; IMP biosynthesis via de novo pathway; 5-amino-1-(5-phospho-D-ribosyl)imidazole-4-carboxamide from 5-amino-1-(5-phospho-D-ribosyl)imidazole-4-carboxylate: step 1/2. This Akkermansia muciniphila (strain ATCC BAA-835 / DSM 22959 / JCM 33894 / BCRC 81048 / CCUG 64013 / CIP 107961 / Muc) protein is Phosphoribosylaminoimidazole-succinocarboxamide synthase.